A 2569-amino-acid polypeptide reads, in one-letter code: Highly reducing polyketide synthase pks5 (2569 aa).

The interval 1-25 (MVVKFANGVRNRGNGDEGQRGTQRP) is disordered. The region spanning 27–452 (STPIAIVGMS…GTNVHVIMEA (426 aa)) is the Ketosynthase family 3 (KS3) domain. Residues C200, H335, and H375 each act as for beta-ketoacyl synthase activity in the active site. The tract at residues 572–892 (IFNGQGAQWY…PYLSCLRRNI (321 aa)) is malonyl-CoA:ACP transacylase (MAT) domain. The tract at residues 960 to 1097 (HELLGSSVPG…GYVSAEDSSK (138 aa)) is N-terminal hotdog fold. The segment at 960 to 1268 (HELLGSSVPG…LRLQKIQAED (309 aa)) is dehydratase (DH) domain. In terms of domain architecture, PKS/mFAS DH spans 960-1270 (HELLGSSVPG…LQKIQAEDDN (311 aa)). Catalysis depends on H992, which acts as the Proton acceptor; for dehydratase activity. The segment at 1117-1270 (RVRHVRPDAM…LQKIQAEDDN (154 aa)) is C-terminal hotdog fold. The active-site Proton donor; for dehydratase activity is the D1179. The methyltransferase (CMet) domain stretch occupies residues 1457–1567 (LEVGAGTGGA…RKLLKPKGKL (111 aa)). Residues 1855-2170 (DLLNKIEFLE…SGTHMGKIVL (316 aa)) are enoyl reductase (ER) domain. The interval 2195–2371 (THLIVGGLRG…AISINLGPVD (177 aa)) is ketoreductase (KR) domain. Residues 2485 to 2562 (AARKLVSELI…DFAALVASRS (78 aa)) form the Carrier domain. O-(pantetheine 4'-phosphoryl)serine is present on S2522.

In terms of biological role, highly reducing polyketide synthase; part of the gene cluster that mediates the biosynthesis of abscisic acid (ABA), a phytohormone that acts antagonistically toward salicylic acid (SA), jasmonic acid (JA) and ethylene (ETH) signaling, to impede plant defense responses. The first step of the pathway catalyzes the reaction from farnesyl diphosphate to alpha-ionylideneethane performed by the alpha-ionylideneethane synthase abl3 via a three-step reaction mechanism involving 2 neutral intermediates, beta-farnesene and allofarnesene. The cytochrome P450 monooxygenase abl1 might then be involved in the conversion of alpha-ionylideneethane to alpha-ionylideneacetic acid. Alpha-ionylideneacetic acid is further converted to abscisic acid in 2 steps involving the cytochrome P450 monooxygenase abl2 and the short-chain dehydrogenase/reductase abl4, via the intermediates 1'-deoxy-ABA or 1',4'-trans-diol-ABA, depending on the order of action of these 2 enzymes. Abl2 is responsible for the hydroxylation of carbon atom C-1' and abl4 might be involved in the oxidation of the C-4' carbon atom. Pks5 is clearly not involved in the production of ABA. Nonetheless, the possibility cannot be excluded that pks5 may modify ABA into another compound. It also cannot be excluded the possibility that pks5 also has a function completely independent of ABA synthesis. Pks5 is not required for pathogenicity on B.napus cotyledon. The polypeptide is Highly reducing polyketide synthase pks5 (Leptosphaeria maculans (strain JN3 / isolate v23.1.3 / race Av1-4-5-6-7-8) (Blackleg fungus)).